Reading from the N-terminus, the 1395-residue chain is uncharacterized protein (1395 aa).

89-96 lines the ATP pocket; sequence AYKKWGKS. Disordered stretches follow at residues 146-166 and 205-391; these read EEKI…LSPP and SSSS…MENR. 2 stretches are compositionally biased toward low complexity: residues 155–166 and 205–222; these read GSPSPEAELSPP and SSSS…TSSP. The segment covering 230 to 269 has biased composition (basic and acidic residues); the sequence is EVTKERSSEVPTTVHEKTQSKSKNEKENKFSNGTIEEKPA. Over residues 287–301 the composition is skewed to low complexity; it reads SWSSGSSEAGSSSSG. Positions 313–328 are enriched in basic residues; that stretch reads VKVRHKAREIRNKKGR. The span at 337–346 shows a compositional bias: basic and acidic residues; sequence KHGEKAERNI. A compositionally biased stretch (low complexity) spans 349–358; it reads GSSSSSSSGS. Positions 369–391 are enriched in basic and acidic residues; sequence PLKEIGRKDPGSTEGKDLYMENR. 2 positions are modified to phosphoserine: Ser-814 and Ser-1080. The interval 1110-1132 is disordered; it reads PISASELSPGGGSESEFESEKDE. Ser-1194 and Ser-1338 each carry phosphoserine. A compositionally biased stretch (basic and acidic residues) spans 1346-1359; it reads TGERDSGAKSDGFR. A disordered region spans residues 1346–1395; it reads TGERDSGAKSDGFRGKMCSSASSTSEETGSEGGGEWVGPSEEELFSRTHL.

This is an uncharacterized protein from Homo sapiens (Human).